We begin with the raw amino-acid sequence, 560 residues long: Membrane protein insertase YidC (560 aa).

Residues 1–21 (MDIKRTILIAALAVVSYVMVL) traverse the membrane as a helical segment. The tract at residues 42-66 (VAPGLPDGVPAGNNGASADVPSANA) is disordered. Helical transmembrane passes span 341-361 (LELT…FWLL), 367-387 (LLGN…GLFF), 437-457 (LGGC…YWVL), 468-488 (WILW…PIIM), and 515-535 (PIIF…YWVV).

This sequence belongs to the OXA1/ALB3/YidC family. Type 1 subfamily. In terms of assembly, interacts with the Sec translocase complex via SecD. Specifically interacts with transmembrane segments of nascent integral membrane proteins during membrane integration.

It localises to the cell inner membrane. Its function is as follows. Required for the insertion and/or proper folding and/or complex formation of integral membrane proteins into the membrane. Involved in integration of membrane proteins that insert both dependently and independently of the Sec translocase complex, as well as at least some lipoproteins. Aids folding of multispanning membrane proteins. This Pseudomonas putida (strain ATCC 47054 / DSM 6125 / CFBP 8728 / NCIMB 11950 / KT2440) protein is Membrane protein insertase YidC.